We begin with the raw amino-acid sequence, 433 residues long: Gamma-glutamyl phosphate reductase 1 (433 aa).

The protein belongs to the gamma-glutamyl phosphate reductase family.

It is found in the cytoplasm. The catalysed reaction is L-glutamate 5-semialdehyde + phosphate + NADP(+) = L-glutamyl 5-phosphate + NADPH + H(+). Its pathway is amino-acid biosynthesis; L-proline biosynthesis; L-glutamate 5-semialdehyde from L-glutamate: step 2/2. Catalyzes the NADPH-dependent reduction of L-glutamate 5-phosphate into L-glutamate 5-semialdehyde and phosphate. The product spontaneously undergoes cyclization to form 1-pyrroline-5-carboxylate. The protein is Gamma-glutamyl phosphate reductase 1 of Synechocystis sp. (strain ATCC 27184 / PCC 6803 / Kazusa).